Consider the following 260-residue polypeptide: uncharacterized protein (260 aa).

A run of 6 helical transmembrane segments spans residues 39 to 59 (IFYL…LIEA), 68 to 88 (IIVG…SFLI), 111 to 131 (FLGS…FFLG), 159 to 179 (LIFS…LFKI), 193 to 213 (FIYL…ILSQ), and 214 to 234 (FILV…IKLI).

It belongs to the TatC family.

The protein localises to the mitochondrion membrane. This is an uncharacterized protein from Reclinomonas americana.